The primary structure comprises 167 residues: Phosphopantetheine adenylyltransferase (167 aa).

Residue T9 coordinates substrate. Residues 9 to 10 and H17 each bind ATP; that span reads TF. Substrate is bound by residues K41, L73, and R87. ATP-binding positions include 88-90, E98, and 123-129; these read GLR and NSYISST.

Belongs to the bacterial CoaD family. In terms of assembly, homohexamer. Requires Mg(2+) as cofactor.

The protein localises to the cytoplasm. The catalysed reaction is (R)-4'-phosphopantetheine + ATP + H(+) = 3'-dephospho-CoA + diphosphate. The protein operates within cofactor biosynthesis; coenzyme A biosynthesis; CoA from (R)-pantothenate: step 4/5. In terms of biological role, reversibly transfers an adenylyl group from ATP to 4'-phosphopantetheine, yielding dephospho-CoA (dPCoA) and pyrophosphate. In Chromohalobacter salexigens (strain ATCC BAA-138 / DSM 3043 / CIP 106854 / NCIMB 13768 / 1H11), this protein is Phosphopantetheine adenylyltransferase.